We begin with the raw amino-acid sequence, 622 residues long: MSNKDELYTFGIGENFHLQNYLGVHSENESFCFRVWAPNAENVQVIGDFTDWRNRPLQMNKNQAGVWEANSLDAREGDLYKYLVTRKGGQVVEKIDPMAVYMERRPGTASVIKVLRNKKWEDGLWMGRRKRLGFQKRPINIYEVHAGSWKKDDFGHPMTFSQLKDYLIPYLVEMNYTHVEFMPLMAHPLDMSWGYQLMGYFAFEHTYGTPEEFQDFVEACHKNNIGVLVDWVPGHFIQNDDALAYFDGTATYEYQNHDRAHNYRWGALNFDLGKNQVQSFLISSALFWIEHYHIDGIRVDAVSNMLYLDYDEGPWEANQFGDNRNLEGYYFLRKLNKVIKERHPNVMMIAEESTASTPITKDLESGGLGFDFKWNMGWMNDILRFYEEDPLYRQYDFNLVTFSFMYIFNENFVLAFSHDEVVHGKKSMMHKMWGDRYNQFAGLRNLYAYQMCHPGKKLLFMGSEFGQFLEWKYNDQLEWENLNDDMNQKMQRYTKQLNQFYKDHKCLWRIDDSFDGIEIIDADNKSETVLSFIRKDDKGDLLLCVFNMTPVERPNFTIGVPQAGIYEEVLNTEMEEFGGVWKNHNPVTKTQVATWKDYDHTLSFTLPALGASVWRIKRRLRK.

Residue aspartate 300 is the Nucleophile of the active site. Glutamate 351 (proton donor) is an active-site residue.

It belongs to the glycosyl hydrolase 13 family. GlgB subfamily. As to quaternary structure, monomer.

It carries out the reaction Transfers a segment of a (1-&gt;4)-alpha-D-glucan chain to a primary hydroxy group in a similar glucan chain.. Its pathway is glycan biosynthesis; glycogen biosynthesis. In terms of biological role, catalyzes the formation of the alpha-1,6-glucosidic linkages in glycogen by scission of a 1,4-alpha-linked oligosaccharide from growing alpha-1,4-glucan chains and the subsequent attachment of the oligosaccharide to the alpha-1,6 position. This Streptococcus agalactiae serotype III (strain NEM316) protein is 1,4-alpha-glucan branching enzyme GlgB.